The sequence spans 416 residues: Phakinin (416 aa).

Positions 1–48 (MSERRVAMDLPSGSNASMPLQRHRVSSLRGTRSPSSLDSPPASRTSAV) are disordered. Ser-2 carries the N-acetylserine modification. Positions 2 to 115 (SERRVAMDLP…HATAEDLGGC (114 aa)) are head. Phosphoserine occurs at positions 27, 33, 36, and 91. Residues 28-48 (LRGTRSPSSLDSPPASRTSAV) are compositionally biased toward polar residues. The IF rod domain maps to 105–416 (NHATAEDLGG…HALLDREESN (312 aa)). Coiled coils occupy residues 199–240 (FRKA…SLSR) and 314–391 (LAAA…ERAH). A tail region spans residues 397-416 (GQLQKDVASYHALLDREESN).

Belongs to the intermediate filament family. As to quaternary structure, part of a complex required for lens intermediate filament formation composed of BFSP1, BFSP2, and CRYAA. Found in a complex composed of PPL (via C-terminal linker domain), BFSP1 and BFSP2 in the retinal lens. Within the complex interacts with PPL (via C-terminal linker domain) and with BFSP1. Identified in a complex that contains VIM, EZR, AHNAK, BFSP1, BFSP2, ANK2, PLEC, PRX and spectrin. Interacts with LGSN. Interacts with VIM. In terms of tissue distribution, expressed in the deep and shallow cortices of the retina lens (at protein level).

The protein localises to the cell membrane. Its subcellular location is the cytoplasm. It localises to the cytoskeleton. The protein resides in the cell cortex. In terms of biological role, required for the correct formation of lens intermediate filaments as part of a complex composed of BFSP1, BFSP2 and CRYAA. Plays a role in maintenance of retinal lens optical clarity. This Rattus norvegicus (Rat) protein is Phakinin.